Here is a 644-residue protein sequence, read N- to C-terminus: Protein ETHYLENE-INSENSITIVE 3-like 1b (644 aa).

2 disordered regions span residues Gln-47–Val-75 and Glu-97–Arg-131. Over residues Ala-66 to Val-75 the composition is skewed to acidic residues.

This sequence belongs to the EIN3 family. As to expression, highly expressed in roots. Expressed at low levels in leaves and panicles.

The protein localises to the nucleus. In terms of biological role, transcription factor acting as a positive regulator in the ethylene response pathway. Involved in wound signaling by binding specifically to the DNA sequence 5'-ATGTACCT-3' found in the promoter of some wound-inducible genes. Binds directly to the DNA sequence 5'-TGTTACAAATACC-3' in the promoter of the GA20OX2 gene to activate its expression at the transcriptional level during ethylene signaling. This Oryza sativa subsp. japonica (Rice) protein is Protein ETHYLENE-INSENSITIVE 3-like 1b.